The primary structure comprises 529 residues: Glucocorticoid modulatory element-binding protein 2 (529 aa).

Residues 80 to 162 (EEGENLEAEI…RKIMDSGELD (83 aa)) enclose the SAND domain. Cys109 provides a ligand contact to Zn(2+). Residues Lys135, Lys139, Lys142, and Arg153 each coordinate DNA. A Glycyl lysine isopeptide (Lys-Gly) (interchain with G-Cter in SUMO1); alternate cross-link involves residue Lys154. Residue Lys154 forms a Glycyl lysine isopeptide (Lys-Gly) (interchain with G-Cter in SUMO2); alternate linkage. Zn(2+) contacts are provided by His166, Cys170, and Cys174. Positions 244 to 347 (LLDEVIQEFQ…HLSNVLMTLT (104 aa)) form a coiled coil. Ser372 carries the phosphoserine modification.

Homodimer, and heterodimer of GMEB1 and GMEB2. Interacts with the glucocorticoid receptor (NR3C1). May interact with CREB-binding protein (CBP).

It is found in the nucleus. The protein resides in the cytoplasm. Trans-acting factor that binds to glucocorticoid modulatory elements (GME) present in the TAT (tyrosine aminotransferase) promoter and increases sensitivity to low concentrations of glucocorticoids. Also binds to the transferrin receptor promoter. This chain is Glucocorticoid modulatory element-binding protein 2 (Gmeb2), found in Rattus norvegicus (Rat).